We begin with the raw amino-acid sequence, 907 residues long: Protein translocase subunit SecA (907 aa).

ATP contacts are provided by residues Q87, 105–109 (GEGKT), and D510. Residues C892, C894, C903, and H904 each coordinate Zn(2+).

This sequence belongs to the SecA family. Monomer and homodimer. Part of the essential Sec protein translocation apparatus which comprises SecA, SecYEG and auxiliary proteins SecDF-YajC and YidC. Zn(2+) serves as cofactor.

It is found in the cell inner membrane. The protein resides in the cytoplasm. It catalyses the reaction ATP + H2O + cellular proteinSide 1 = ADP + phosphate + cellular proteinSide 2.. In terms of biological role, part of the Sec protein translocase complex. Interacts with the SecYEG preprotein conducting channel. Has a central role in coupling the hydrolysis of ATP to the transfer of proteins into and across the cell membrane, serving both as a receptor for the preprotein-SecB complex and as an ATP-driven molecular motor driving the stepwise translocation of polypeptide chains across the membrane. The polypeptide is Protein translocase subunit SecA (Acinetobacter baumannii (strain AB0057)).